Reading from the N-terminus, the 698-residue chain is Serotransferrin (698 aa).

An N-terminal signal peptide occupies residues 1–19; that stretch reads MRFAVGALLACAALGLCLA. Transferrin-like domains lie at 25–347 and 360–683; these read VKWC…NQRE and VKWC…NIRK. Cystine bridges form between Cys-28-Cys-67 and Cys-38-Cys-58. At Arg-42 the chain carries Dimethylated arginine. Fe(3+)-binding residues include Asp-82 and Tyr-114. 8 cysteine pairs are disulfide-bonded: Cys-137/Cys-213, Cys-156/Cys-350, Cys-177/Cys-193, Cys-180/Cys-196, Cys-190/Cys-198, Cys-246/Cys-260, Cys-363/Cys-395, and Cys-373/Cys-386. Residues Thr-139, Arg-143, Ala-145, and Gly-146 each coordinate hydrogencarbonate. Tyr-207 contributes to the Fe(3+) binding site. Fe(3+) is bound at residue His-268. A Phosphoserine modification is found at Ser-388. Fe(3+)-binding residues include Asp-410 and Tyr-447. 8 cysteine pairs are disulfide-bonded: Cys-420–Cys-693, Cys-435–Cys-656, Cys-471–Cys-542, Cys-495–Cys-684, Cys-505–Cys-519, Cys-516–Cys-525, Cys-582–Cys-596, and Cys-634–Cys-639. 4 residues coordinate hydrogencarbonate: Thr-473, Arg-477, Ala-479, and Gly-480. Asn-512 is a glycosylation site (N-linked (GlcNAc...) asparagine). Tyr-536 is a Fe(3+) binding site. Residue His-604 coordinates Fe(3+). Ser-685 carries the post-translational modification Phosphoserine.

Belongs to the transferrin family. Monomer. Part of a complex composed of SLC40A1/ferroportin, TF/transferrin and HEPH/hephaestin that transfers iron from cells to transferrin. As to expression, expressed by the liver and secreted in plasma.

It localises to the secreted. In terms of biological role, transferrins are iron binding transport proteins which can bind two Fe(3+) ions in association with the binding of an anion, usually bicarbonate. It is responsible for the transport of iron from sites of absorption and heme degradation to those of storage and utilization. Serum transferrin may also have a further role in stimulating cell proliferation. In Rattus norvegicus (Rat), this protein is Serotransferrin (Tf).